A 162-amino-acid polypeptide reads, in one-letter code: MSQVYFDVEADGQPIGRVVFKLYNDIVPKTAENFRALCTGEKGFGYAGSPFHRVIPDFMLQGGDFTAGNGTGGKSIYGGKFPDENFKKHHDRPGLLSMANAGPNTNGSQFFITTVPCPWLDGKHVVFGEVVDGYDIVKKVESLGSPSGATKARIVVAKSGEL.

Residue S2 is modified to N-acetylserine. The PPIase cyclophilin-type domain maps to Y5–E161. Glycyl lysine isopeptide (Lys-Gly) (interchain with G-Cter in ubiquitin) cross-links involve residues K29 and K42. T71 carries the post-translational modification Phosphothreonine. Residues K123 and K139 each participate in a glycyl lysine isopeptide (Lys-Gly) (interchain with G-Cter in ubiquitin) cross-link. Phosphoserine is present on residues S142 and S145. Residues K151 and K158 each participate in a glycyl lysine isopeptide (Lys-Gly) (interchain with G-Cter in ubiquitin) cross-link.

The protein belongs to the cyclophilin-type PPIase family. PPIase A subfamily. Interacts with a complex composed of SIN3 and RPD3. Identified in the Set3C complex with HOS2, HST1, SNT1, SIF2, HOS4/YIL112W and SET3.

It localises to the cytoplasm. It is found in the nucleus. The protein resides in the mitochondrion intermembrane space. It carries out the reaction [protein]-peptidylproline (omega=180) = [protein]-peptidylproline (omega=0). Binds cyclosporin A (CsA). CsA mediates some of its effects via an inhibitory action on PPIase. PPIases accelerate the folding of proteins. It catalyzes the cis-trans isomerization of proline imidic peptide bonds in oligopeptides. Involved in histone deacetylase complexes, suggesting a function in chromatin. Imports fructose-1,6-bisphosphatase (FBPase) into the intermediate vacuole import and degradation (Vid) vesicles. Regulates the meiotic gene program via the Set3C histone deacetylase complex to promote efficient sporulation, and the prolyl-isomerase activity is required for this function. The polypeptide is Peptidyl-prolyl cis-trans isomerase (CPR1) (Saccharomyces cerevisiae (strain ATCC 204508 / S288c) (Baker's yeast)).